Reading from the N-terminus, the 159-residue chain is Ecotin (159 aa).

The N-terminal stretch at Met-1–Ala-22 is a signal peptide. Cys-68 and Cys-105 are disulfide-bonded.

Belongs to the protease inhibitor I11 (ecotin) family. In terms of assembly, homodimer.

The protein localises to the periplasm. Its function is as follows. General inhibitor of family S1 serine proteases. The polypeptide is Ecotin (Pseudomonas putida (strain ATCC 700007 / DSM 6899 / JCM 31910 / BCRC 17059 / LMG 24140 / F1)).